The chain runs to 178 residues: Interleukin-10 (178 aa).

An N-terminal signal peptide occupies residues 1–18 (MHSSALLCCLVFLTGVRA). Intrachain disulfides connect C30–C126 and C80–C132. N134 carries N-linked (GlcNAc...) asparagine glycosylation.

This sequence belongs to the IL-10 family. Homodimer. Interacts with IL10RA and IL10RB.

The protein localises to the secreted. In terms of biological role, major immune regulatory cytokine that acts on many cells of the immune system where it has profound anti-inflammatory functions, limiting excessive tissue disruption caused by inflammation. Mechanistically, IL10 binds to its heterotetrameric receptor comprising IL10RA and IL10RB leading to JAK1 and STAT2-mediated phosphorylation of STAT3. In turn, STAT3 translocates to the nucleus where it drives expression of anti-inflammatory mediators. Targets antigen-presenting cells (APCs) such as macrophages and monocytes and inhibits their release of pro-inflammatory cytokines including granulocyte-macrophage colony-stimulating factor /GM-CSF, granulocyte colony-stimulating factor/G-CSF, IL-1 alpha, IL-1 beta, IL-6, IL-8 and TNF-alpha. Also interferes with antigen presentation by reducing the expression of MHC-class II and co-stimulatory molecules, thereby inhibiting their ability to induce T cell activation. In addition, controls the inflammatory response of macrophages by reprogramming essential metabolic pathways including mTOR signaling. This is Interleukin-10 (IL10) from Callithrix jacchus (White-tufted-ear marmoset).